The chain runs to 564 residues: Rhotekin (564 aa).

R14 is subject to Omega-N-methylarginine. The region spanning 17-98 (ALEMEFKRGR…LQRRKEAQVL (82 aa)) is the REM-1 domain. 2 positions are modified to phosphoserine: S30 and S106. Asymmetric dimethylarginine is present on R230. S232 is subject to Phosphoserine. Residues 309–416 (QPTASGALRV…WMEALWQLFF (108 aa)) enclose the PH domain. The disordered stretch occupies residues 518 to 564 (TFSLDAAPADHSLGPSRSVAPLPPQRSPKSRGFYSKSQLGPWLQSPV). S520, S529, and S544 each carry phosphoserine.

Interacts via its C-terminal region with the TAX1BP3 PDZ domain. This interaction facilitates Rho-mediated activation of the c-Fos serum response element (SRE). Interacts with SEPT9. Specifically binds to GTP-bound RHOA, RHOB and RHOC and inhibits their GTPase activity. In terms of tissue distribution, abundantly expressed in brain and kidney. Weakly expressed in lung, testis, skeletal muscle, heart and thymus.

Mediates Rho signaling to activate NF-kappa-B and may confer increased resistance to apoptosis to cells in gastric tumorigenesis. May play a novel role in the organization of septin structures. The sequence is that of Rhotekin from Mus musculus (Mouse).